The sequence spans 65 residues: Beta-mammal toxin Tpa2 (65 aa).

The 63-residue stretch at 2–64 (KEGYLVGNDG…TWSRATNRCG (63 aa)) folds into the LCN-type CS-alpha/beta domain. Cystine bridges form between Cys12-Cys63, Cys16-Cys38, Cys24-Cys44, and Cys28-Cys46.

In terms of tissue distribution, expressed by the venom gland.

Its subcellular location is the secreted. In terms of biological role, beta toxins bind voltage-independently at site-4 of sodium channels (Nav) and shift the voltage of activation toward more negative potentials thereby affecting sodium channel activation and promoting spontaneous and repetitive firing. This toxin is lethal to mice. The chain is Beta-mammal toxin Tpa2 from Tityus pachyurus (Colombian scorpion).